A 127-amino-acid polypeptide reads, in one-letter code: F420-non-reducing hydrogenase subunit G (127 aa).

This sequence belongs to the [NiFe]/[NiFeSe] hydrogenase small subunit family. As to quaternary structure, the F420-non-reducing hydrogenase is composed of three subunits; MvhA, MvhD and MvhG. It forms a complex with the heterodisulfide reductase (hdr).

Part of a complex that provides reducing equivalents for heterodisulfide reductase. In Methanothermus fervidus, this protein is F420-non-reducing hydrogenase subunit G (mvhG).